The primary structure comprises 238 residues: uncharacterized protein (238 aa).

Residues 1–64 form the S4 RNA-binding domain; it reads MRLDKYLSKS…KPKKNVYLML (64 aa). Catalysis depends on Asp103, which acts as the Nucleophile.

The protein belongs to the pseudouridine synthase RsuA family.

It catalyses the reaction a uridine in RNA = a pseudouridine in RNA. This is an uncharacterized protein from Aquifex aeolicus (strain VF5).